The chain runs to 129 residues: Antileukoproteinase (129 aa).

Residues 1-22 (GRGLLPFVLLALGIXAPWAVEG) form the signal peptide. 2 WAP domains span residues 25 to 73 (NALK…LNPV) and 79 to 127 (VKVK…LTPV). 8 cysteine pairs are disulfide-bonded: Cys-32-Cys-61, Cys-40-Cys-65, Cys-48-Cys-60, Cys-54-Cys-69, Cys-86-Cys-115, Cys-93-Cys-119, Cys-102-Cys-114, and Cys-108-Cys-123. The segment at 81 to 129 (VKPGKCPVVYGQCMMLNPPNHCKTDSQCLGDLKCCKSMCGKVCLTPVKA) is elastase inhibitory domain.

In terms of assembly, interacts with GRN; interaction protects progranulin from proteolysis. In terms of tissue distribution, found in pregnant endometrium and myometrium, placenta, allantoic fluids, fetal cord blood, and fetal liver. Also found in uterus and lung.

It is found in the secreted. Acid-stable proteinase inhibitor with strong affinities for trypsin, chymotrypsin, elastase, and cathepsin G. Modulates the inflammatory and immune responses after bacterial infection, and after infection by the intracellular parasite L.major. Down-regulates responses to bacterial lipopolysaccharide (LPS). Plays a role in regulating the activation of NF-kappa-B and inflammatory responses. Has antimicrobial activity against mycobacteria, but not against salmonella. Contributes to normal resistance against infection by M.tuberculosis. Required for normal resistance to infection by L.major. Required for normal wound healing, probably by preventing tissue damage by limiting protease activity. Together with ELANE, required for normal differentiation and proliferation of bone marrow myeloid cells. This is Antileukoproteinase (SLPI) from Sus scrofa (Pig).